Consider the following 104-residue polypeptide: Protein MHF2 homolog (104 aa).

It belongs to the CENP-X/MHF2 family.

Its subcellular location is the nucleus. In terms of biological role, acts in the same pathway as FANCM to restrain class II meiotic crossing over (CO), and acts with FANCM during meiosis to repair interstrand cross-links (ICLs). This chain is Protein MHF2 homolog, found in Arabidopsis thaliana (Mouse-ear cress).